Reading from the N-terminus, the 947-residue chain is MTPLSSPLSQYCQTVVERLPEGFTETSLSAQAKSVLTFSDFALDSVIAHPEWLAELESASPQADEWRHYAGWLQEALAGVCDDASLMRELRLFRRRIMVRIAWAQTLSLVDDETILQQLSHLAETLIVGARDWLYAACCREWGTPCNPQGVPQPLLILGMGKLGGGELNFSSDIDLIFAWPEHGETRGGRRELDNAQFFTRLGQRLIKALDQPTMDGFVYRVDMRLRPFGDSGPLVLSFAALEDYYQEQGRDWERYAMVKARLMGDNDDAWSRELRAMLRPFVFRRYIDFSVIQSLRNMKGMIAREVRRRGLKDNIKLGAGGIREIEFIVQVFQLIRGGREPSLQSRSLLPTLDAIAALHLLPENDVAQLRMAYLFLRRLENLLQSINDEQTQTLPADDLNRARLAWGMKAENWPQLVGELTDHMANVRRVFNELIGDDEADTPQEEERSEPWREVWQDALQEDDSTPVLAHLADEDRRQVLTLIADFRKELDKRPIGPRGRQVLDQLMPHLLANVCSREDAAVTLSRITPLLAGIVTRTTYLELLSEFPGALKHLIMLCAASPMIASQLARYPLLLDELLDPGTLYQPTATDAYRDELRQYLLRVPEEDEEQQLEALRQFKQAQLLRIAAADIAGTLPVMKVSDHLTWLAEAMIDAVVQQAWTQMVARYGQPAHLDERQGRGFAVVGYGKLGGWELGYSSDLDLIFLHDCPMDVMTNGEREIDGRQFYLRLAQRIMHLFSTRTSSGILYEVDARLRPSGAAGMLVTSADAFADYQQHEAWTWEHQALVRARVVYGDPQLTSQFDAVRRTIMTTARDGKTLQTEVREMREKMRAHLGNKHRDRFDIKADEGGITDIEFIAQYLVLRYAHEKPKLTRWSDNVRILELLAQNGIMDEHEAQALTVAYTTLRDELHHLALQELPGHVAQTCFSKERALVQASWRKWLVAV.

The segment at 1–440 (MTPLSSPLSQ…VFNELIGDDE (440 aa)) is adenylyl removase. An adenylyl transferase region spans residues 450 to 947 (SEPWREVWQD…ASWRKWLVAV (498 aa)).

The protein belongs to the GlnE family. Mg(2+) is required as a cofactor.

The enzyme catalyses [glutamine synthetase]-O(4)-(5'-adenylyl)-L-tyrosine + phosphate = [glutamine synthetase]-L-tyrosine + ADP. The catalysed reaction is [glutamine synthetase]-L-tyrosine + ATP = [glutamine synthetase]-O(4)-(5'-adenylyl)-L-tyrosine + diphosphate. Its function is as follows. Involved in the regulation of glutamine synthetase GlnA, a key enzyme in the process to assimilate ammonia. When cellular nitrogen levels are high, the C-terminal adenylyl transferase (AT) inactivates GlnA by covalent transfer of an adenylyl group from ATP to specific tyrosine residue of GlnA, thus reducing its activity. Conversely, when nitrogen levels are low, the N-terminal adenylyl removase (AR) activates GlnA by removing the adenylyl group by phosphorolysis, increasing its activity. The regulatory region of GlnE binds the signal transduction protein PII (GlnB) which indicates the nitrogen status of the cell. This is Bifunctional glutamine synthetase adenylyltransferase/adenylyl-removing enzyme from Salmonella paratyphi A (strain ATCC 9150 / SARB42).